The following is a 118-amino-acid chain: uncharacterized protein (118 aa).

It localises to the mitochondrion. This is an uncharacterized protein from Arabidopsis thaliana (Mouse-ear cress).